The chain runs to 519 residues: T-box transcription factor TBX5 (519 aa).

Residues 1-43 (MADTEEAYGMPDTPVEAEPKELQCEPKQDNQMGASSKTPTSPQ) form a disordered region. The segment covering 17 to 28 (AEPKELQCEPKQ) has biased composition (basic and acidic residues). Residues 29 to 43 (DNQMGASSKTPTSPQ) show a composition bias toward polar residues. A DNA-binding region (T-box) is located at residues 63–238 (LWLKFHEVGT…NNPFAKGFRG (176 aa)). Disordered regions lie at residues 254 to 312 (EYPV…SAYP) and 335 to 376 (ELSY…TESA). Over residues 262–303 (TVRQKVSSNHSPFSQETRNITGSSTLNSQYQCENGVSSTSQD) the composition is skewed to polar residues.

In terms of assembly, monomer. Homodimer (via the T-box); binds DNA as homodimer.

It localises to the nucleus. The protein localises to the cytoplasm. Functionally, DNA-binding protein that regulates the transcription of several genes and is involved in heart development and limb pattern formation. May bind to the core DNA motif of promoters. This Xenopus tropicalis (Western clawed frog) protein is T-box transcription factor TBX5 (tbx5).